The chain runs to 378 residues: MEEVSSHVKSGKPVMILDSEKSAICIPAEVVSGEILNFMMKNCDEIRLALTWKQILNLGLNRFRFQNGNLIPIDPNLEKISAEERAKFIRELVSGNAGDIKYPGRIFVEETKEMGVLERPGIAEACVDLARMAGFAPSAVYAPLMTAEGGVAGEDYALKFAKEHSMPVFRIKDMIEFRIKSEKIVERVIEATLPTKFYGTFRAVGYKTPLGEIVALVKGRVDEGDVLVRIHSECLTGDVFHSLRCDCGDQLENALKMIDREGKGVAIYMRGHEGRGIGLINKLMAYKLQEEGKDTVDANIELGFPPDMRSYGIAAQILMDLKVKSIRLLTNNPLKIEELKKYGFKIVREPIEVEPCEVNLPYLKAKKDKMGHLICFND.

Residues 1–180 (MEEVSSHVKS…IKDMIEFRIK (180 aa)) form a DHBP synthase-like region. Residues 181–378 (SEKIVERVIE…KMGHLICFND (198 aa)) form a GTP cyclohydrolase II region. 229–233 (RIHSE) serves as a coordination point for GTP. Positions 234, 245, and 247 each coordinate Zn(2+). Residues Gln-250, 273–275 (EGR), and Thr-295 each bind GTP. Catalysis depends on Asp-307, which acts as the Proton acceptor. The Nucleophile role is filled by Arg-309. The GTP site is built by Thr-330 and Lys-335.

It in the N-terminal section; belongs to the DHBP synthase family. This sequence in the C-terminal section; belongs to the GTP cyclohydrolase II family. The cofactor is Zn(2+).

The enzyme catalyses GTP + 4 H2O = 2,5-diamino-6-hydroxy-4-(5-phosphoribosylamino)-pyrimidine + formate + 2 phosphate + 3 H(+). The protein operates within cofactor biosynthesis; riboflavin biosynthesis; 5-amino-6-(D-ribitylamino)uracil from GTP: step 1/4. Functionally, catalyzes the conversion of GTP to 2,5-diamino-6-ribosylamino-4(3H)-pyrimidinone 5'-phosphate (DARP), formate and pyrophosphate. The polypeptide is GTP cyclohydrolase-2 (ribA) (Archaeoglobus fulgidus (strain ATCC 49558 / DSM 4304 / JCM 9628 / NBRC 100126 / VC-16)).